We begin with the raw amino-acid sequence, 90 residues long: Acylphosphatase (90 aa).

The Acylphosphatase-like domain maps to 3 to 90; the sequence is AVTLKATGRV…QNYHDFRITN (88 aa). Residues Arg-18 and Asn-36 contribute to the active site.

Belongs to the acylphosphatase family.

It carries out the reaction an acyl phosphate + H2O = a carboxylate + phosphate + H(+). This is Acylphosphatase (acyP) from Lactiplantibacillus plantarum (strain ATCC BAA-793 / NCIMB 8826 / WCFS1) (Lactobacillus plantarum).